A 462-amino-acid chain; its full sequence is GTPase Der (462 aa).

EngA-type G domains follow at residues 3-166 and 175-348; these read PVIA…ITEM and IKIA…HSAI. Residues 9–16, 56–60, 118–121, 181–188, 228–232, and 293–296 each bind GTP; these read GRPNVGKS, DTGGI, NKTD, DTAGV, and NKWD. Residues 349–433 form the KH-like domain; it reads QSFSTPKLTR…PLKIEFKGGQ (85 aa).

This sequence belongs to the TRAFAC class TrmE-Era-EngA-EngB-Septin-like GTPase superfamily. EngA (Der) GTPase family. Associates with the 50S ribosomal subunit.

GTPase that plays an essential role in the late steps of ribosome biogenesis. This Legionella pneumophila (strain Lens) protein is GTPase Der.